The following is a 161-amino-acid chain: Blue copper protein 1a (161 aa).

The signal sequence occupies residues Met1–Ala23. Residues Thr24–Ala124 enclose the Phytocyanin domain. His64 serves as a coordination point for Cu cation. Asn70 is a glycosylation site (N-linked (GlcNAc...) asparagine). Cys77 and Cys111 are joined by a disulfide. Positions 105, 110, and 116 each coordinate Cu cation. The chain crosses the membrane as a helical span at residues Val141–Ala161.

The protein localises to the membrane. The sequence is that of Blue copper protein 1a from Medicago truncatula (Barrel medic).